A 256-amino-acid polypeptide reads, in one-letter code: MLTYPNINPIAFSLGPLKVHWYGLMYLIGFVSAWLLGYWRIKHYKLNWNNDQLSDLIFYSALGVILGGRVGYMLFYDFQEFIHHPWVLFKIWEGGMSFHGGLLGVVIAAWLFCRKYGKTFLEVGDFVAPLVPLGLAAGRLGNFINGELWGRITDVPWGMIYPHVDDQPRHPSQLYEFGLEGVALFILIWCYASKPRQQGRVSALFLMGYAICRLIAESFRQPDSQLGFVAFGWLTMGQVLSIPMLLIGIWLWWAKR.

A run of 3 helical transmembrane segments spans residues 19–39, 56–76, and 91–111; these read VHWY…LGYW, LIFY…MLFY, and IWEG…AAWL. Position 139 (Arg139) interacts with a 1,2-diacyl-sn-glycero-3-phospho-(1'-sn-glycerol). Residues 231 to 251 traverse the membrane as a helical segment; that stretch reads FGWLTMGQVLSIPMLLIGIWL.

Belongs to the Lgt family.

The protein localises to the cell inner membrane. The enzyme catalyses L-cysteinyl-[prolipoprotein] + a 1,2-diacyl-sn-glycero-3-phospho-(1'-sn-glycerol) = an S-1,2-diacyl-sn-glyceryl-L-cysteinyl-[prolipoprotein] + sn-glycerol 1-phosphate + H(+). The protein operates within protein modification; lipoprotein biosynthesis (diacylglyceryl transfer). Its function is as follows. Catalyzes the transfer of the diacylglyceryl group from phosphatidylglycerol to the sulfhydryl group of the N-terminal cysteine of a prolipoprotein, the first step in the formation of mature lipoproteins. This Legionella pneumophila (strain Lens) protein is Phosphatidylglycerol--prolipoprotein diacylglyceryl transferase.